The chain runs to 282 residues: 4-hydroxybenzoate octaprenyltransferase (282 aa).

9 consecutive transmembrane segments (helical) span residues 17-37 (IGILLLWYPTAWALWMANQGF), 40-60 (IDLLMIFLLGTVFMRSAGCVI), 90-110 (AFILLFILLCASLFLLLKLPI), 113-133 (FYFAVISVLITFLYPFCKRFF), 135-155 (APQLVLGLAFSMGIPMAFIAS), 163-183 (FIVLFLINFSWIIAYDTMYAM), 207-227 (LIIALLLIFLHSLWLVWAINK), 231-251 (CFFYLLWCTAAGILTYQLKLI), and 262-282 (AFLVSGYYGLVMWFAVGLALI).

It belongs to the UbiA prenyltransferase family. Mg(2+) serves as cofactor.

Its subcellular location is the cell inner membrane. It carries out the reaction all-trans-octaprenyl diphosphate + 4-hydroxybenzoate = 4-hydroxy-3-(all-trans-octaprenyl)benzoate + diphosphate. It participates in cofactor biosynthesis; ubiquinone biosynthesis. In terms of biological role, catalyzes the prenylation of para-hydroxybenzoate (PHB) with an all-trans polyprenyl group. Mediates the second step in the final reaction sequence of ubiquinone-8 (UQ-8) biosynthesis, which is the condensation of the polyisoprenoid side chain with PHB, generating the first membrane-bound Q intermediate 3-octaprenyl-4-hydroxybenzoate. This Legionella pneumophila (strain Lens) protein is 4-hydroxybenzoate octaprenyltransferase.